A 61-amino-acid chain; its full sequence is MAEFTEKVKSFLAESKRVLLVTKKPGMKEFKLAAKITGIGMILIGTIGMIIRIIGYLVTGS.

Residues 38–58 (GIGMILIGTIGMIIRIIGYLV) traverse the membrane as a helical segment.

This sequence belongs to the SecE/SEC61-gamma family. In terms of assembly, component of the Sec protein translocase complex. Heterotrimer consisting of SecY (alpha), SecG (beta) and SecE (gamma) subunits. The heterotrimers can form oligomers, although 1 heterotrimer is thought to be able to translocate proteins. Interacts with the ribosome. May interact with SecDF, and other proteins may be involved.

It localises to the cell membrane. Its function is as follows. Essential subunit of the Sec protein translocation channel SecYEG. Clamps together the 2 halves of SecY. May contact the channel plug during translocation. In Thermococcus kodakarensis (strain ATCC BAA-918 / JCM 12380 / KOD1) (Pyrococcus kodakaraensis (strain KOD1)), this protein is Protein translocase subunit SecE.